The chain runs to 145 residues: uncharacterized protein (145 aa).

The signal sequence occupies residues 1-26; sequence MAILLPLKSILPWCCITFSFLLSSSG.

This is an uncharacterized protein from Saccharomyces cerevisiae (strain ATCC 204508 / S288c) (Baker's yeast).